The following is a 421-amino-acid chain: Zinc metalloproteinase-disintegrin-like lachestatin-2 (421 aa).

The region spanning lysine 10–proline 206 is the Peptidase M12B domain. Cystine bridges form between cysteine 121–cysteine 201, cysteine 161–cysteine 185, and cysteine 163–cysteine 168. Histidine 146 contacts Zn(2+). The active site involves glutamate 147. Positions 150 and 156 each coordinate Zn(2+). The Disintegrin domain maps to proline 214 to asparagine 299. The Ca(2+) site is built by valine 216, asparagine 219, phenylalanine 221, glutamate 223, glutamate 226, and aspartate 229. 14 disulfide bridges follow: cysteine 217/cysteine 246, cysteine 228/cysteine 241, cysteine 230/cysteine 236, cysteine 240/cysteine 263, cysteine 254/cysteine 260, cysteine 259/cysteine 285, cysteine 272/cysteine 292, cysteine 279/cysteine 310, cysteine 303/cysteine 315, cysteine 322/cysteine 372, cysteine 337/cysteine 383, cysteine 350/cysteine 360, cysteine 367/cysteine 409, and cysteine 403/cysteine 414. Positions glutamate 278 to aspartate 280 match the D/ECD-tripeptide motif. The Ca(2+) site is built by aspartate 280, methionine 281, aspartate 283, aspartate 294, and arginine 295. N-linked (GlcNAc...) asparagine glycosylation is present at asparagine 312.

The protein belongs to the venom metalloproteinase (M12B) family. P-III subfamily. P-IIIc sub-subfamily. Homodimer; disulfide-linked. Zn(2+) is required as a cofactor. As to expression, expressed by the venom gland.

It is found in the secreted. Functionally, snake venom zinc metalloprotease that induces apoptosis in vascular endothelial cells (VEC), without degrading the extracellular matrix (it cannot cleave collagen) or inhibiting adhesion of VEC. Has also fibrinogenolytic and hemorrhagic activities. The polypeptide is Zinc metalloproteinase-disintegrin-like lachestatin-2 (Lachesis muta rhombeata (Bushmaster)).